A 247-amino-acid chain; its full sequence is Protein AC124 (247 aa).

It localises to the host cytoplasm. Its subcellular location is the host nucleus. Accelerates mortality in insect larvae. In Lepidoptera (butterflies and moths), this protein is Protein AC124.